We begin with the raw amino-acid sequence, 117 residues long: Appetite-regulating hormone (117 aa).

A signal peptide spans 1 to 23; it reads MPSLGTMCSLLLFSVLWVDLAMA. S26 carries the O-decanoyl serine; alternate lipid modification. S26 is lipidated: O-hexanoyl serine; alternate. S26 carries the O-octanoyl serine; alternate lipid modification. The interval 30 to 68 is disordered; the sequence is PEHQKLQQRKESKKPPAKLQPRALEGSLGPEDTSQVEEA. Over residues 31 to 43 the composition is skewed to basic and acidic residues; that stretch reads EHQKLQQRKESKK. Positions 52 to 75 are cleaved as a propeptide — removed in mature form; that stretch reads ALEGSLGPEDTSQVEEAEDELEIR. At L98 the chain carries Leucine amide. A propeptide spans 99-117 (removed in mature form); that stretch reads GKFLQEVLWEDTNEALADE.

This sequence belongs to the motilin family. O-octanoylated by GOAT/MBOAT4. O-octanoylation is essential for ghrelin activity. In terms of processing, amidation of Leu-98 is essential for obestatin activity.

Its subcellular location is the secreted. Its function is as follows. Ghrelin is the ligand for growth hormone secretagogue receptor type 1 (GHSR). Induces the release of growth hormone from the pituitary. Has an appetite-stimulating effect, induces adiposity and stimulates gastric acid secretion. Involved in growth regulation. In terms of biological role, obestatin may be the ligand for GPR39. May have an appetite-reducing effect resulting in decreased food intake. May reduce gastric emptying activity and jejunal motility. The sequence is that of Appetite-regulating hormone (GHRL) from Canis lupus familiaris (Dog).